Here is a 341-residue protein sequence, read N- to C-terminus: L-threonine 3-dehydrogenase (341 aa).

Cys-38 lines the Zn(2+) pocket. Catalysis depends on charge relay system residues Thr-40 and His-43. 6 residues coordinate Zn(2+): His-63, Glu-64, Cys-93, Cys-96, Cys-99, and Cys-107. Residues Ile-175, Asp-195, Arg-200, 262 to 264 (LGI), and 286 to 287 (IY) each bind NAD(+).

It belongs to the zinc-containing alcohol dehydrogenase family. In terms of assembly, homotetramer. Zn(2+) is required as a cofactor.

The protein localises to the cytoplasm. It carries out the reaction L-threonine + NAD(+) = (2S)-2-amino-3-oxobutanoate + NADH + H(+). The protein operates within amino-acid degradation; L-threonine degradation via oxydo-reductase pathway; glycine from L-threonine: step 1/2. Functionally, catalyzes the NAD(+)-dependent oxidation of L-threonine to 2-amino-3-ketobutyrate. The sequence is that of L-threonine 3-dehydrogenase from Escherichia fergusonii (strain ATCC 35469 / DSM 13698 / CCUG 18766 / IAM 14443 / JCM 21226 / LMG 7866 / NBRC 102419 / NCTC 12128 / CDC 0568-73).